We begin with the raw amino-acid sequence, 372 residues long: DNA replication and repair protein RecF (372 aa).

G30–T37 lines the ATP pocket.

The protein belongs to the RecF family.

The protein localises to the cytoplasm. Functionally, the RecF protein is involved in DNA metabolism; it is required for DNA replication and normal SOS inducibility. RecF binds preferentially to single-stranded, linear DNA. It also seems to bind ATP. The protein is DNA replication and repair protein RecF of Ruminiclostridium cellulolyticum (strain ATCC 35319 / DSM 5812 / JCM 6584 / H10) (Clostridium cellulolyticum).